A 117-amino-acid chain; its full sequence is Large ribosomal subunit protein uL18 (117 aa).

Belongs to the universal ribosomal protein uL18 family. Part of the 50S ribosomal subunit; part of the 5S rRNA/L5/L18/L25 subcomplex. Contacts the 5S and 23S rRNAs.

Functionally, this is one of the proteins that bind and probably mediate the attachment of the 5S RNA into the large ribosomal subunit, where it forms part of the central protuberance. The polypeptide is Large ribosomal subunit protein uL18 (Haemophilus ducreyi (strain 35000HP / ATCC 700724)).